The chain runs to 371 residues: Queuine tRNA-ribosyltransferase (371 aa).

The Proton acceptor role is filled by D90. Substrate contacts are provided by residues 90-94 (DSGGF), D144, Q188, and G215. Residues 246-252 (GVGTPED) form an RNA binding region. The active-site Nucleophile is the D265. Residues 270–274 (TRNAR) form an RNA binding; important for wobble base 34 recognition region. 4 residues coordinate Zn(2+): C303, C305, C308, and H334.

This sequence belongs to the queuine tRNA-ribosyltransferase family. Homodimer. Within each dimer, one monomer is responsible for RNA recognition and catalysis, while the other monomer binds to the replacement base PreQ1. Zn(2+) serves as cofactor.

The enzyme catalyses 7-aminomethyl-7-carbaguanine + guanosine(34) in tRNA = 7-aminomethyl-7-carbaguanosine(34) in tRNA + guanine. It participates in tRNA modification; tRNA-queuosine biosynthesis. Its function is as follows. Catalyzes the base-exchange of a guanine (G) residue with the queuine precursor 7-aminomethyl-7-deazaguanine (PreQ1) at position 34 (anticodon wobble position) in tRNAs with GU(N) anticodons (tRNA-Asp, -Asn, -His and -Tyr). Catalysis occurs through a double-displacement mechanism. The nucleophile active site attacks the C1' of nucleotide 34 to detach the guanine base from the RNA, forming a covalent enzyme-RNA intermediate. The proton acceptor active site deprotonates the incoming PreQ1, allowing a nucleophilic attack on the C1' of the ribose to form the product. After dissociation, two additional enzymatic reactions on the tRNA convert PreQ1 to queuine (Q), resulting in the hypermodified nucleoside queuosine (7-(((4,5-cis-dihydroxy-2-cyclopenten-1-yl)amino)methyl)-7-deazaguanosine). The sequence is that of Queuine tRNA-ribosyltransferase from Chromobacterium violaceum (strain ATCC 12472 / DSM 30191 / JCM 1249 / CCUG 213 / NBRC 12614 / NCIMB 9131 / NCTC 9757 / MK).